A 669-amino-acid polypeptide reads, in one-letter code: Diacylglycerol lipase-beta (669 aa).

The Cytoplasmic portion of the chain corresponds to 1-17 (MPGMVLFGRRWSLASDD). A helical transmembrane segment spans residues 18 to 38 (LVFPGSFELFLRVLWWIVSLT). At 39–58 (LYLTHRRRLDCPGGVLLSTY) the chain is on the extracellular side. The helical transmembrane segment at 59–79 (LIVLLVLLAVIICTVLAIVCV) threads the bilayer. Topologically, residues 80 to 102 (SMRGTICNPGPRKSMSKLLYIRL) are cytoplasmic. A helical membrane pass occupies residues 103-123 (ALFLPEMVWASLGAAWVAKGI). The Extracellular segment spans residues 124-128 (QCDRT). Residues 129-149 (VVIGIIATVIVSWIVIAATMV) traverse the membrane as a helical segment. The Cytoplasmic portion of the chain corresponds to 150–669 (TIIFVFDPLG…CPGQGGSSVP (520 aa)). Active-site charge relay system residues include Ser-443 and Asp-495. Phosphoserine is present on residues Ser-570, Ser-578, and Ser-582.

It belongs to the AB hydrolase superfamily. Lipase family. The cofactor is Ca(2+). As to expression, expressed in liver and immune cells such as macrophages and microglias. In embryonic brains present in axonal tracts, while in adults localizes to dendritic fields, correlating with the developmental change in requirement for 2-AG synthesis from the pre- to the postsynaptic compartment (at protein level).

The protein resides in the cell membrane. The enzyme catalyses a 1,2-diacyl-sn-glycerol + H2O = a 2-acylglycerol + a fatty acid + H(+). It carries out the reaction 1-octadecanoyl-2-(5Z,8Z,11Z,14Z-eicosatetraenoyl)-sn-glycerol + H2O = 2-(5Z,8Z,11Z,14Z-eicosatetraenoyl)-glycerol + octadecanoate + H(+). It catalyses the reaction 1,2-di-(9Z-octadecenoyl)-sn-glycerol + H2O = 2-(9Z-octadecenoyl)-glycerol + (9Z)-octadecenoate + H(+). The catalysed reaction is 1-(9Z-octadecenoyl)-2-(5Z,8Z,11Z,14Z-eicosatetraenoyl)-sn-glycerol + H2O = 2-(5Z,8Z,11Z,14Z-eicosatetraenoyl)-glycerol + (9Z)-octadecenoate + H(+). The enzyme catalyses 1-(9Z-octadecenoyl)-2-octadecanoyl-sn-glycerol + H2O = 2-octadecanoylglycerol + (9Z)-octadecenoate + H(+). It carries out the reaction 1-(9Z-octadecenoyl)-2-(9Z,12Z-octadecadienoyl)-sn-glycerol + H2O = 2-(9Z,12Z-octadecadienoyl)-glycerol + (9Z)-octadecenoate + H(+). It catalyses the reaction 1-(9Z-octadecenoyl)-2-O-(5Z,8Z,11Z,14Z-eicosatetraenyl)-sn-glycerol + H2O = 2-O-(5Z,8Z,11Z,14Z)-eicosatetraenylglycerol + (9Z)-octadecenoate + H(+). The catalysed reaction is a triacylglycerol + H2O = a diacylglycerol + a fatty acid + H(+). The enzyme catalyses 1,2,3-tri-(5Z,8Z,11Z,14Z-eicosatetraenoyl)-glycerol + H2O = 1,2-di-(5Z,8Z,11Z,14Z-eicosatetraenoyl)-glycerol + (5Z,8Z,11Z,14Z)-eicosatetraenoate + H(+). It carries out the reaction 1,2,3-(4Z,7Z,10Z,13Z,16Z,19Z-docosahexaenoyl)-glycerol + H2O = 1,2-di-(4Z,7Z,10Z,13Z,16Z,19Z-docosahexaenoyl)-glycerol + (4Z,7Z,10Z,13Z,16Z,19Z)-docosahexaenoate + H(+). Its activity is regulated as follows. Inhibited by the 1,2,3-triazole urea covalent inhibitors KT109 and KT172. Inhibited by p-hydroxy-mercuri-benzoate and HgCl(2), but not by PMSF. Also inhibited by RHC80267, a drug that blocks 2-AG formation. Functionally, lipase that catalyzes the hydrolysis of arachidonic acid (AA)-esterified diacylglycerols (DAGs) to produce the principal endocannabinoid, 2-arachidonoylglycerol (2-AG) which can be further cleaved by downstream enzymes to release arachidonic acid (AA) for cyclooxygenase (COX)-mediated eicosanoid production. Preferentially hydrolyzes DAGs at the sn-1 position in a calcium-dependent manner and has negligible activity against other lipids including monoacylglycerols and phospholipids. Plays a key role in the regulation of 2-AG and AA pools utilized by COX1/2 to generate lipid mediators of macrophage and microglia inflammatory responses. Also functions as a polyunsaturated fatty acids-specific triacylglycerol lipase in macrophages. Plays an important role to support the metabolic and signaling demands of macrophages. This Mus musculus (Mouse) protein is Diacylglycerol lipase-beta (Daglb).